The following is a 91-amino-acid chain: Small ribosomal subunit protein uS15 (91 aa).

Belongs to the universal ribosomal protein uS15 family. In terms of assembly, part of the 30S ribosomal subunit. Forms a bridge to the 50S subunit in the 70S ribosome, contacting the 23S rRNA.

One of the primary rRNA binding proteins, it binds directly to 16S rRNA where it helps nucleate assembly of the platform of the 30S subunit by binding and bridging several RNA helices of the 16S rRNA. Its function is as follows. Forms an intersubunit bridge (bridge B4) with the 23S rRNA of the 50S subunit in the ribosome. The polypeptide is Small ribosomal subunit protein uS15 (Sulfurimonas denitrificans (strain ATCC 33889 / DSM 1251) (Thiomicrospira denitrificans (strain ATCC 33889 / DSM 1251))).